We begin with the raw amino-acid sequence, 291 residues long: 4-hydroxy-tetrahydrodipicolinate synthase (291 aa).

A pyruvate-binding site is contributed by T44. Y132 functions as the Proton donor/acceptor in the catalytic mechanism. K160 functions as the Schiff-base intermediate with substrate in the catalytic mechanism. I202 lines the pyruvate pocket.

The protein belongs to the DapA family. In terms of assembly, homotetramer; dimer of dimers.

Its subcellular location is the cytoplasm. It catalyses the reaction L-aspartate 4-semialdehyde + pyruvate = (2S,4S)-4-hydroxy-2,3,4,5-tetrahydrodipicolinate + H2O + H(+). It functions in the pathway amino-acid biosynthesis; L-lysine biosynthesis via DAP pathway; (S)-tetrahydrodipicolinate from L-aspartate: step 3/4. Catalyzes the condensation of (S)-aspartate-beta-semialdehyde [(S)-ASA] and pyruvate to 4-hydroxy-tetrahydrodipicolinate (HTPA). The sequence is that of 4-hydroxy-tetrahydrodipicolinate synthase from Syntrophus aciditrophicus (strain SB).